We begin with the raw amino-acid sequence, 300 residues long: Bis(5'-nucleosyl)-tetraphosphatase, symmetrical (300 aa).

The protein belongs to the Ap4A hydrolase family.

The enzyme catalyses P(1),P(4)-bis(5'-adenosyl) tetraphosphate + H2O = 2 ADP + 2 H(+). In terms of biological role, hydrolyzes diadenosine 5',5'''-P1,P4-tetraphosphate to yield ADP. The protein is Bis(5'-nucleosyl)-tetraphosphatase, symmetrical of Pseudomonas syringae pv. tomato (strain ATCC BAA-871 / DC3000).